A 413-amino-acid chain; its full sequence is Glucose-1-phosphate adenylyltransferase (413 aa).

Alpha-D-glucose 1-phosphate-binding positions include Gly161, 176–177, and Ser195; that span reads EK.

This sequence belongs to the bacterial/plant glucose-1-phosphate adenylyltransferase family. In terms of assembly, homotetramer.

It carries out the reaction alpha-D-glucose 1-phosphate + ATP + H(+) = ADP-alpha-D-glucose + diphosphate. It participates in glycan biosynthesis; glycogen biosynthesis. Functionally, involved in the biosynthesis of ADP-glucose, a building block required for the elongation reactions to produce glycogen. Catalyzes the reaction between ATP and alpha-D-glucose 1-phosphate (G1P) to produce pyrophosphate and ADP-Glc. This chain is Glucose-1-phosphate adenylyltransferase, found in Anaeromyxobacter dehalogenans (strain 2CP-C).